The primary structure comprises 750 residues: Catalase-peroxidase 1 (750 aa).

Positions 90 to 238 (WHSAGTYRVM…VSAAHMGLIY (149 aa)) form a cross-link, tryptophyl-tyrosyl-methioninium (Trp-Tyr) (with M-264). Residue His-91 is the Proton acceptor of the active site. The segment at 199–218 (NEGHKESGVIDGSESKKGHK) is disordered. Over residues 200-218 (EGHKESGVIDGSESKKGHK) the composition is skewed to basic and acidic residues. The segment at residues 238–264 (YVNPEGPDGIPDPVAAARDIRTTFSRM) is a cross-link (tryptophyl-tyrosyl-methioninium (Tyr-Met) (with W-90)). Residue His-279 coordinates heme b.

The protein belongs to the peroxidase family. Peroxidase/catalase subfamily. As to quaternary structure, homodimer or homotetramer. Predominantly homodimeric. Heme b is required as a cofactor. Post-translationally, formation of the three residue Trp-Tyr-Met cross-link is important for the catalase, but not the peroxidase activity of the enzyme.

Its subcellular location is the cytoplasm. The enzyme catalyses H2O2 + AH2 = A + 2 H2O. The catalysed reaction is 2 H2O2 = O2 + 2 H2O. Its function is as follows. Bifunctional enzyme with both catalase and broad-spectrum peroxidase activity. This is Catalase-peroxidase 1 from Pyricularia oryzae (strain 70-15 / ATCC MYA-4617 / FGSC 8958) (Rice blast fungus).